Consider the following 463-residue polypeptide: MTNYRTESDSFGEIQIEDKFYWGAQTQRSLENFKIGKQRMPEILIRSLAILKKCAAKVNLEFGDLEPKIAESIDKATSRILNAEFSDNFPLVVWQTGSGTQTNMNMNEVIASIANEELTGMKGGKSPVHPNDHVNKGQSSNDSFPTAMHIATVLATREKLIPALNNLLTALQNKSKDWDSIIKIGRTHLQDATPLTLKQEFSGYITQIEYALERIEDALKKVYLLAQGGTAVGTGINSRKGFDIKFAEEVAEFTKQPFKTAPNKFESLAAHDALVEFSGTLNTIAVSLMKIANDIRLLGSGPRCGLGELHLPENEPGSSIMPGKVNPTQVEALTMVCTQVMGNHVTVTIAGSNGHLELNVFKPVIIYNILQSIELLSDAANSFVTHCVDGIEPNITHINDLRDKSLMLVTALNPHIGYDNAAKIAKEAHKHGITLKEAAKKLNLLSEEEFNKIVVPEKMVRQS.

Residues 98-100 (SGT), 129-132 (HPND), 139-141 (SSN), and threonine 187 contribute to the substrate site. Histidine 188 functions as the Proton donor/acceptor in the catalytic mechanism. Residue serine 318 is part of the active site. Residues serine 319 and 324–326 (KVN) each bind substrate.

It belongs to the class-II fumarase/aspartase family. Fumarase subfamily. Homotetramer.

It is found in the cytoplasm. It carries out the reaction (S)-malate = fumarate + H2O. The protein operates within carbohydrate metabolism; tricarboxylic acid cycle; (S)-malate from fumarate: step 1/1. Functionally, involved in the TCA cycle. Catalyzes the stereospecific interconversion of fumarate to L-malate. The protein is Fumarate hydratase class II of Rickettsia bellii (strain RML369-C).